Here is a 195-residue protein sequence, read N- to C-terminus: uncharacterized protein (195 aa).

The tract at residues 143–195 is disordered; it reads NKLIETINTNRTNNTDNKSTKSKKQTETKKSLRTNKIVKQPINKSKKNIREEY. Residues 148–159 are compositionally biased toward low complexity; the sequence is TINTNRTNNTDN.

This is an uncharacterized protein from Acanthamoeba polyphaga (Amoeba).